The following is a 587-amino-acid chain: Dynein axonemal intermediate chain 2 (587 aa).

4 WD repeats span residues 214 to 254, 261 to 302, 362 to 401, and 405 to 445; these read RPAS…NPVE, SHRD…EPTE, GHHG…SSIM, and YHTS…NNPS. 2 disordered regions span residues 519–542 and 562–587; these read LKER…DMKE and KEQQ…IVHE.

Belongs to the dynein intermediate chain family. Consists of at least two heavy chains and a number of intermediate and light chains. Interacts with DNAAF2. Interacts with DNAAF6/PIH1D3. Interacts with HEATR2; probably involved in outer arm dynein assembly. Interacts with C16ORF71/DAAP1.

It localises to the cytoplasm. The protein localises to the cytoskeleton. It is found in the cilium axoneme. Its subcellular location is the dynein axonemal particle. Functionally, part of the dynein complex of multiciliated cell cilia. This is Dynein axonemal intermediate chain 2 (dnai2) from Xenopus laevis (African clawed frog).